Here is an 875-residue protein sequence, read N- to C-terminus: Alanine--tRNA ligase (875 aa).

Residues His596, His600, Cys700, and His704 each contribute to the Zn(2+) site.

The protein belongs to the class-II aminoacyl-tRNA synthetase family. It depends on Zn(2+) as a cofactor.

It is found in the cytoplasm. It carries out the reaction tRNA(Ala) + L-alanine + ATP = L-alanyl-tRNA(Ala) + AMP + diphosphate. Functionally, catalyzes the attachment of alanine to tRNA(Ala) in a two-step reaction: alanine is first activated by ATP to form Ala-AMP and then transferred to the acceptor end of tRNA(Ala). Also edits incorrectly charged Ser-tRNA(Ala) and Gly-tRNA(Ala) via its editing domain. This Methanocella arvoryzae (strain DSM 22066 / NBRC 105507 / MRE50) protein is Alanine--tRNA ligase.